The chain runs to 386 residues: Succinate--CoA ligase [ADP-forming] subunit beta (386 aa).

Residues 9 to 244 form the ATP-grasp domain; that stretch reads KAILRSYGVS…LDEEDPKEIE (236 aa). ATP is bound by residues lysine 46, 53 to 55, glutamate 99, cysteine 102, and glutamate 107; that span reads GRG. Asparagine 199 and aspartate 213 together coordinate Mg(2+). Substrate is bound by residues asparagine 264 and 321–323; that span reads GIM.

It belongs to the succinate/malate CoA ligase beta subunit family. Heterotetramer of two alpha and two beta subunits. The cofactor is Mg(2+).

The enzyme catalyses succinate + ATP + CoA = succinyl-CoA + ADP + phosphate. The catalysed reaction is GTP + succinate + CoA = succinyl-CoA + GDP + phosphate. Its pathway is carbohydrate metabolism; tricarboxylic acid cycle; succinate from succinyl-CoA (ligase route): step 1/1. Its function is as follows. Succinyl-CoA synthetase functions in the citric acid cycle (TCA), coupling the hydrolysis of succinyl-CoA to the synthesis of either ATP or GTP and thus represents the only step of substrate-level phosphorylation in the TCA. The beta subunit provides nucleotide specificity of the enzyme and binds the substrate succinate, while the binding sites for coenzyme A and phosphate are found in the alpha subunit. The protein is Succinate--CoA ligase [ADP-forming] subunit beta of Bacillus cytotoxicus (strain DSM 22905 / CIP 110041 / 391-98 / NVH 391-98).